Consider the following 214-residue polypeptide: 3-demethoxyubiquinol 3-hydroxylase (214 aa).

Fe cation-binding residues include Glu63, Glu93, His96, Glu145, Glu177, and His180.

This sequence belongs to the COQ7 family. Fe cation serves as cofactor.

It is found in the cell membrane. The catalysed reaction is a 5-methoxy-2-methyl-3-(all-trans-polyprenyl)benzene-1,4-diol + AH2 + O2 = a 3-demethylubiquinol + A + H2O. Its pathway is cofactor biosynthesis; ubiquinone biosynthesis. Functionally, catalyzes the hydroxylation of 2-nonaprenyl-3-methyl-6-methoxy-1,4-benzoquinol during ubiquinone biosynthesis. The polypeptide is 3-demethoxyubiquinol 3-hydroxylase (Nitrosococcus oceani (strain ATCC 19707 / BCRC 17464 / JCM 30415 / NCIMB 11848 / C-107)).